A 969-amino-acid polypeptide reads, in one-letter code: Leucine--tRNA ligase (969 aa).

A 'HIGH' region motif is present at residues 46–56; that stretch reads PYLNGVLHAGH. A 'KMSKS' region motif is present at residues 658 to 662; it reads KLSKS. Lys661 contributes to the ATP binding site.

Belongs to the class-I aminoacyl-tRNA synthetase family.

It is found in the cytoplasm. It catalyses the reaction tRNA(Leu) + L-leucine + ATP = L-leucyl-tRNA(Leu) + AMP + diphosphate. In Methanococcus aeolicus (strain ATCC BAA-1280 / DSM 17508 / OCM 812 / Nankai-3), this protein is Leucine--tRNA ligase.